A 327-amino-acid polypeptide reads, in one-letter code: Cell surface glycoprotein CD200 receptor 1 (327 aa).

The N-terminal stretch at 1-23 is a signal peptide; sequence MLCFWRTSHVAVLLIWGVFAAES. The Extracellular portion of the chain corresponds to 24–239; the sequence is SCPDKNQTMQ…GRGGDQLLGS (216 aa). The region spanning 26 to 145 is the Ig-like V-type domain; sequence PDKNQTMQNN…GNFQNIYDLQ (120 aa). 8 N-linked (GlcNAc...) asparagine glycosylation sites follow: asparagine 29, asparagine 34, asparagine 43, asparagine 96, asparagine 159, asparagine 187, asparagine 192, and asparagine 222. 2 cysteine pairs are disulfide-bonded: cysteine 58–cysteine 129 and cysteine 81–cysteine 97. Residues 147–226 form the Ig-like C2-type domain; that stretch reads LVPPEVTHFP…HLTTGNQSLS (80 aa). 2 cysteine pairs are disulfide-bonded: cysteine 164/cysteine 213 and cysteine 183/cysteine 201. A helical transmembrane segment spans residues 240-260; sequence YIQYIIPSIIILIIIGCICLL. Residues 261–327 lie on the Cytoplasmic side of the membrane; that stretch reads KISGCRKCKL…DCLTLSAMGI (67 aa).

Belongs to the CD200R family. In terms of assembly, CD200 and CD200R1 interact via their respective N-terminal Ig-like domains. In terms of processing, phosphorylated on tyrosine residues. Highly N-glycosylated. In terms of tissue distribution, restricted to cells of the myeloid lineage.

Its subcellular location is the cell membrane. Inhibitory receptor for the CD200/OX2 cell surface glycoprotein. Limits inflammation by inhibiting the expression of pro-inflammatory molecules including TNF-alpha, interferons, and inducible nitric oxide synthase (iNOS) in response to selected stimuli. In Rattus norvegicus (Rat), this protein is Cell surface glycoprotein CD200 receptor 1 (Cd200r1).